The sequence spans 401 residues: Phosphoglycerate kinase (401 aa).

Substrate-binding positions include 23 to 25 (DLN), Arg-38, 61 to 64 (HFGR), Arg-120, and Arg-153. ATP-binding positions include Lys-203, Glu-325, and 355–358 (GGDT).

Belongs to the phosphoglycerate kinase family. Monomer.

It localises to the cytoplasm. The enzyme catalyses (2R)-3-phosphoglycerate + ATP = (2R)-3-phospho-glyceroyl phosphate + ADP. It participates in carbohydrate degradation; glycolysis; pyruvate from D-glyceraldehyde 3-phosphate: step 2/5. This chain is Phosphoglycerate kinase, found in Rhizobium johnstonii (strain DSM 114642 / LMG 32736 / 3841) (Rhizobium leguminosarum bv. viciae).